A 79-amino-acid polypeptide reads, in one-letter code: Sulfur carrier protein TusA (79 aa).

Catalysis depends on Cys17, which acts as the Cysteine persulfide intermediate.

It belongs to the sulfur carrier protein TusA family.

The protein resides in the cytoplasm. Functionally, sulfur carrier protein which probably makes part of a sulfur-relay system. This chain is Sulfur carrier protein TusA, found in Actinobacillus succinogenes (strain ATCC 55618 / DSM 22257 / CCUG 43843 / 130Z).